Reading from the N-terminus, the 143-residue chain is Beta/delta-urticatoxin-Uf2b (143 aa).

A signal peptide spans 1-18 (MGAIVLVALMALVASSSA). Residues 19–80 (FSDIEHNIMK…MMLSGRPQPN (62 aa)) constitute a propeptide that is removed on maturation. Intrachain disulfides connect Cys-83/Cys-100, Cys-90/Cys-105, Cys-99/Cys-113, Cys-115/Cys-129, Cys-122/Cys-134, and Cys-128/Cys-142.

This sequence belongs to the urticatoxin-2 family. In terms of tissue distribution, expressed in trichomes, that are stiff epidermal hairs located on the surface of petioles and leaves.

It is found in the secreted. Its function is as follows. Plant defense neurotoxin that causes pain and systemic symptoms in mammals via modulation of voltage-gated sodium channels (Nav). Potent modulator of human Nav1.5/SCN5A (EC(50)=55 nM), Nav1.6/SCN8A (EC(50)=0.86 nM), and Nav1.7/SCN9A (EC(50)=208 nM), where it shifts the activation threshold to more negative potentials and delays fast inactivation. Also shifts the voltage-dependence of steady-state fast inactivation of Nav1.6/SCN8A, but not that of Nav1.5/SCN5A or Nav1.7/SCN9A. On Nav1.7/SCN9A, principally acts by binding to extracellular loops of domain IV (Nav site 3). In vivo, intraplantar injection into mice causes numerous dose-dependent, immediate, and long-lasting spontaneous pain behaviors, while no swelling is observed in the injected paw. At the highest doses tested, systemic symptoms including hypokinesia and hypersalivation are observed. The polypeptide is Beta/delta-urticatoxin-Uf2b (Urtica ferox (Tree nettle)).